Here is a 59-residue protein sequence, read N- to C-terminus: Thrombostatin (59 aa).

Disulfide bonds link Cys-3–Cys-22, Cys-17–Cys-37, Cys-39–Cys-51, and Cys-52–Cys-57. The short motif at Arg-43–Asp-45 is the Cell attachment site element.

The protein belongs to the three-finger toxin family. Short-chain subfamily. Antiplatelet toxin sub-subfamily. Expressed by the venom gland.

The protein localises to the secreted. Functionally, inhibits ADP-induced platelet aggregation and inhibits the binding of purified platelet fibrinogen receptor alpha-IIb/beta-3 (ITGA2B/ITGB3) to immobilized fibrinogen. The sequence is that of Thrombostatin from Dendroaspis angusticeps (Eastern green mamba).